The sequence spans 151 residues: Sec-independent protein translocase protein TatB (151 aa).

The helical transmembrane segment at 1-21 (MFDVSFTELMVIGVIALVVIG) threads the bilayer. The interval 66–151 (MDETARSMQT…DKTPPTGSAT (86 aa)) is disordered. Over residues 93–103 (AELDDTARDAS) the composition is skewed to basic and acidic residues. Low complexity-rich tracts occupy residues 109–122 (ADAP…VASD) and 133–151 (APPA…GSAT).

The protein belongs to the TatB family. As to quaternary structure, the Tat system comprises two distinct complexes: a TatABC complex, containing multiple copies of TatA, TatB and TatC subunits, and a separate TatA complex, containing only TatA subunits. Substrates initially bind to the TatABC complex, which probably triggers association of the separate TatA complex to form the active translocon.

It is found in the cell inner membrane. Part of the twin-arginine translocation (Tat) system that transports large folded proteins containing a characteristic twin-arginine motif in their signal peptide across membranes. Together with TatC, TatB is part of a receptor directly interacting with Tat signal peptides. TatB may form an oligomeric binding site that transiently accommodates folded Tat precursor proteins before their translocation. The sequence is that of Sec-independent protein translocase protein TatB from Bordetella parapertussis (strain 12822 / ATCC BAA-587 / NCTC 13253).